The sequence spans 348 residues: Galactose-1-phosphate uridylyltransferase (348 aa).

Residue 28-31 (RAKR) coordinates UDP-alpha-D-glucose. The Zn(2+) site is built by cysteine 52 and cysteine 55. UDP-alpha-D-glucose-binding positions include valine 61 and 77–78 (ND). Histidine 115 provides a ligand contact to Zn(2+). UDP-alpha-D-glucose contacts are provided by residues asparagine 153 and 159-161 (GCS). Histidine 164 provides a ligand contact to Zn(2+). The Tele-UMP-histidine intermediate role is filled by histidine 166. Glutamine 168 provides a ligand contact to UDP-alpha-D-glucose. Fe cation contacts are provided by glutamate 182, histidine 281, histidine 296, and histidine 298. UDP-alpha-D-glucose-binding positions include 311-312 (KF), 316-317 (YE), and glutamine 323.

It belongs to the galactose-1-phosphate uridylyltransferase type 1 family. In terms of assembly, homodimer. It depends on Zn(2+) as a cofactor.

It catalyses the reaction alpha-D-galactose 1-phosphate + UDP-alpha-D-glucose = alpha-D-glucose 1-phosphate + UDP-alpha-D-galactose. It participates in carbohydrate metabolism; galactose metabolism. In Escherichia coli (strain K12), this protein is Galactose-1-phosphate uridylyltransferase (galT).